We begin with the raw amino-acid sequence, 267 residues long: Thiamine pyrophosphokinase 1 (267 aa).

It belongs to the thiamine pyrophosphokinase family. In terms of tissue distribution, expressed in roots, leaves and flowers.

It is found in the cytoplasm. It localises to the cytosol. The catalysed reaction is thiamine + ATP = thiamine diphosphate + AMP + H(+). Its pathway is cofactor biosynthesis; thiamine diphosphate biosynthesis; thiamine diphosphate from thiamine: step 1/1. Catalyzes the phosphorylation of thiamine to thiamine pyrophosphate (TPP). TPP is an active cofactor for enzymes involved in glycolysis and energy production. Plant leaves require high levels of TPP for photosynthesis and carbohydrate metabolism. The sequence is that of Thiamine pyrophosphokinase 1 from Arabidopsis thaliana (Mouse-ear cress).